The chain runs to 355 residues: Aurora kinase (355 aa).

A Protein kinase domain is found at 89–340 (FEIGKPLGKG…LEQVMRHPWI (252 aa)). ATP-binding positions include 95-103 (LGKGKFGRV) and lysine 118. Aspartate 212 (proton acceptor) is an active-site residue.

This sequence belongs to the protein kinase superfamily. Ser/Thr protein kinase family. Aurora subfamily. As to quaternary structure, component of the CPC complex at least composed of ark1, bir1 and pic1. Interacts with the mitotic checkpoint complex (MCC) subunit mad3.

Its subcellular location is the nucleus. It is found in the cytoplasm. It localises to the cytoskeleton. The protein resides in the spindle. It catalyses the reaction L-seryl-[protein] + ATP = O-phospho-L-seryl-[protein] + ADP + H(+). The enzyme catalyses L-threonyl-[protein] + ATP = O-phospho-L-threonyl-[protein] + ADP + H(+). Component of the chromosomal passenger complex (CPC), a complex that acts as a key regulator of chromosome segregation and cytokinesis. Has a role in error-correction of aberrent kinetochore-microtubule attachments to ensure that sister kinetochores become bioriented and connect to opposite poles by promoting spindle assembly checkpoint signaling. Ark1 is also required for phosphorylation of histone H3 that accompanies chromosome condensation and condensin recruitment to mitotic chromatin. The sequence is that of Aurora kinase (ark1) from Schizosaccharomyces pombe (strain 972 / ATCC 24843) (Fission yeast).